Here is a 305-residue protein sequence, read N- to C-terminus: HTH-type transcriptional regulator KdgR (305 aa).

In terms of domain architecture, HTH iclR-type spans 55-116 (VSSVLKVFGI…GESEKYSLTL (62 aa)). The H-T-H motif DNA-binding region spans 76–95 (ITELSQRVMMSKSTVYRFLQ). The IclR-ED domain maps to 131–300 (LIRSADIQMR…ARNISDQMGY (170 aa)).

Homodimer.

Its subcellular location is the cytoplasm. Its function is as follows. Transcriptional repressor that negatively regulates the expression of genes involved in pectinolysis and in pectinase secretion. Controls genes involved in pectin catabolism, including the pectinase genes (pelA, pelB, pelC, pelE), genes involved in pectin catabolism (kdgT, ogl, kduI-kdgF) and the outT gene involved in pectinase secretion. Acts by binding directly to KdgR binding sites (KdgR-box) in the gene operator/promoter region. This Dickeya chrysanthemi (Pectobacterium chrysanthemi) protein is HTH-type transcriptional regulator KdgR.